Consider the following 3420-residue polypeptide: Adhesin BmaC autotransporter (3420 aa).

Residues 1–72 form the signal peptide; it reads MPNLANQDFT…SLVMAGTAAA (72 aa). One can recognise an Autotransporter domain in the interval 3138 to 3420; it reads GPSGNNGIWA…AGSVGLRVRW (283 aa).

It is found in the cell surface. Its subcellular location is the cell outer membrane. In terms of biological role, fibronectin-binding protein, which is involved in adhesion to host cells and in the infective process. Mediates the binding of B.suis to the extracellular matrix and to non-phagocytic cells via cell-associated fibronectin. The chain is Adhesin BmaC autotransporter from Brucella suis biovar 1 (strain 1330).